Consider the following 58-residue polypeptide: uncharacterized protein (58 aa).

Disordered stretches follow at residues 1 to 20 (MKKN…MNKK) and 38 to 58 (IIET…KKQQ).

This is an uncharacterized protein from Bacillus subtilis (strain 168).